The following is a 1545-amino-acid chain: Dual oxidase 2 (1545 aa).

The N-terminal stretch at 1–25 is a signal peptide; the sequence is MLCIRPEALVLLGALLTVPLDPVGG. Residues 26-601 lie on the Extracellular side of the membrane; it reads QDALSLTWEV…EGSGPGFGIT (576 aa). Positions 30-596 are peroxidase-like; mediates peroxidase activity; it reads SLTWEVQRYD…VIQYFEGSGP (567 aa). N-linked (GlcNAc...) asparagine glycosylation is found at Asn100, Asn312, Asn348, Asn358, Asn455, and Asn549. A disulfide bridge connects residues Cys124 and Cys1159. A helical transmembrane segment spans residues 602-622; the sequence is IVALCCLPLMSLLISGVVAYF. The Cytoplasmic portion of the chain corresponds to 623–1037; sequence RSRERKKLQK…YKRFVENYRR (415 aa). 3 EF-hand domains span residues 819 to 854, 855 to 890, and 899 to 934; these read PQDM…FMKG, SPED…FIEI, and QLTE…HDSE. 9 residues coordinate Ca(2+): Asp832, Asp834, Asn836, Tyr838, Glu843, Asp868, Asp870, Asn872, and Glu879. Residues 960–1242 are interaction with TXNDC11; sequence RVSFIIRTPE…GSFALIQLPR (283 aa). The chain crosses the membrane as a helical span at residues 1038 to 1058; it reads HIVCVAIFSAICAGLFVERAY. The Extracellular segment spans residues 1059 to 1074; sequence YYAFVSPPSGIAETTF. Residues 1075–1097 traverse the membrane as a helical segment; the sequence is VGIILSRGTAASVSFMFSYILLT. In terms of domain architecture, Ferric oxidoreductase spans 1081 to 1263; that stretch reads RGTAASVSFM…YVGDKLVSLS (183 aa). Residues 1098–1125 lie on the Cytoplasmic side of the membrane; sequence MCRNLITFLRETFLNHYVPFDAAVDFHR. Residues 1126 to 1148 form a helical membrane-spanning segment; sequence WIAMAALVLAILHSVGHVVNVYI. Over 1149–1182 the chain is Extracellular; that stretch reads FSVSPLSLLACVFPSVFVNDGSKLPQKFYWWFFQ. A helical membrane pass occupies residues 1183–1203; sequence TIPGMTGVLLLVVLAIMYVFA. Topologically, residues 1204 to 1220 are cytoplasmic; it reads SPYFRRRSFRGFWLTHH. Residues 1221-1241 traverse the membrane as a helical segment; that stretch reads FYILLYVLLIIHGSFALIQLP. Residue Arg1242 is a topological domain, extracellular. A helical membrane pass occupies residues 1243 to 1263; sequence FHIFFLVPALIYVGDKLVSLS. The FAD-binding FR-type domain occupies 1264-1370; the sequence is RKKVEISVVK…DGPFGEGHQE (107 aa). Residues 1264-1545 are Cytoplasmic-facing; sequence RKKVEISVVK…THFVHHYENF (282 aa).

This sequence in the N-terminal section; belongs to the peroxidase family. Heterodimer with DUOXA2; disulfide-linked. Interacts with TXNDC11, TPO and CYBA. N-glycosylated. Expressed in thyroid, and the digestive tract especially in stomach, cecum and sigmoidal colon (at protein level). Expressed in thyroid.

The protein localises to the apical cell membrane. Its subcellular location is the cell junction. The catalysed reaction is NADH + O2 + H(+) = H2O2 + NAD(+). It carries out the reaction NADPH + O2 + H(+) = H2O2 + NADP(+). It functions in the pathway hormone biosynthesis; thyroid hormone biosynthesis. With respect to regulation, the NADPH oxidase activity is calcium-dependent. Peroxidase activity is inhibited by aminobenzohydrazide. Its function is as follows. Generates hydrogen peroxide which is required for the activity of thyroid peroxidase/TPO and lactoperoxidase/LPO. Plays a role in thyroid hormones synthesis and lactoperoxidase-mediated antimicrobial defense at the surface of mucosa. May have its own peroxidase activity through its N-terminal peroxidase-like domain. In Sus scrofa (Pig), this protein is Dual oxidase 2 (DUOX2).